Consider the following 425-residue polypeptide: Serine--tRNA ligase (425 aa).

Residue 230–232 (TGE) coordinates L-serine. An ATP-binding site is contributed by 261 to 263 (RKE). Residue glutamate 284 coordinates L-serine. 348–351 (EISS) serves as a coordination point for ATP. L-serine is bound at residue serine 385.

It belongs to the class-II aminoacyl-tRNA synthetase family. Type-1 seryl-tRNA synthetase subfamily. Homodimer. The tRNA molecule binds across the dimer.

It is found in the cytoplasm. It carries out the reaction tRNA(Ser) + L-serine + ATP = L-seryl-tRNA(Ser) + AMP + diphosphate + H(+). It catalyses the reaction tRNA(Sec) + L-serine + ATP = L-seryl-tRNA(Sec) + AMP + diphosphate + H(+). The protein operates within aminoacyl-tRNA biosynthesis; selenocysteinyl-tRNA(Sec) biosynthesis; L-seryl-tRNA(Sec) from L-serine and tRNA(Sec): step 1/1. Functionally, catalyzes the attachment of serine to tRNA(Ser). Is also able to aminoacylate tRNA(Sec) with serine, to form the misacylated tRNA L-seryl-tRNA(Sec), which will be further converted into selenocysteinyl-tRNA(Sec). The sequence is that of Serine--tRNA ligase from Wolbachia sp. subsp. Brugia malayi (strain TRS).